Here is a 114-residue protein sequence, read N- to C-terminus: U-myrmeciitoxin(01)-Mg8a (114 aa).

A signal peptide spans 1-20 (MKLSTLLVAFVLLVITVILS). Positions 21–44 (TPSTNAKALAESNALAVAVSEAEP) are excised as a propeptide.

The protein belongs to the formicidae venom precursor-01 superfamily. As to expression, expressed by the venom gland.

It localises to the secreted. May have antimicrobial properties, like most ant linear peptides. This Myrmecia gulosa (Red bulldog ant) protein is U-myrmeciitoxin(01)-Mg8a.